The chain runs to 392 residues: Putative glutamate--cysteine ligase 2 (392 aa).

Positions 347 to 367 (AARKHGAAPEPGTRTRGDDGV) are disordered.

This sequence belongs to the glutamate--cysteine ligase type 2 family. YbdK subfamily.

It catalyses the reaction L-cysteine + L-glutamate + ATP = gamma-L-glutamyl-L-cysteine + ADP + phosphate + H(+). In terms of biological role, ATP-dependent carboxylate-amine ligase which exhibits weak glutamate--cysteine ligase activity. In Corynebacterium jeikeium (strain K411), this protein is Putative glutamate--cysteine ligase 2.